The sequence spans 420 residues: ATP phosphoribosyltransferase regulatory subunit (420 aa).

This sequence belongs to the class-II aminoacyl-tRNA synthetase family. HisZ subfamily. As to quaternary structure, heteromultimer composed of HisG and HisZ subunits.

It is found in the cytoplasm. It functions in the pathway amino-acid biosynthesis; L-histidine biosynthesis; L-histidine from 5-phospho-alpha-D-ribose 1-diphosphate: step 1/9. Required for the first step of histidine biosynthesis. May allow the feedback regulation of ATP phosphoribosyltransferase activity by histidine. This is ATP phosphoribosyltransferase regulatory subunit from Bacillus cereus (strain G9842).